A 189-amino-acid chain; its full sequence is Probable nicotinate-nucleotide adenylyltransferase (189 aa).

Belongs to the NadD family.

It carries out the reaction nicotinate beta-D-ribonucleotide + ATP + H(+) = deamido-NAD(+) + diphosphate. It functions in the pathway cofactor biosynthesis; NAD(+) biosynthesis; deamido-NAD(+) from nicotinate D-ribonucleotide: step 1/1. Catalyzes the reversible adenylation of nicotinate mononucleotide (NaMN) to nicotinic acid adenine dinucleotide (NaAD). The protein is Probable nicotinate-nucleotide adenylyltransferase of Bacillus mycoides (strain KBAB4) (Bacillus weihenstephanensis).